A 382-amino-acid polypeptide reads, in one-letter code: Succinate--CoA ligase [ADP-forming] subunit beta (382 aa).

Residues 9 to 240 form the ATP-grasp domain; it reads KELFSKYGVK…PRDVTEFEAY (232 aa). Residues lysine 45, 52-54, valine 94, and glutamate 99 contribute to the ATP site; that span reads GRG. Asparagine 193 and aspartate 207 together coordinate Mg(2+). Substrate-binding positions include asparagine 260 and 317–319; that span reads GIT.

It belongs to the succinate/malate CoA ligase beta subunit family. Heterotetramer of two alpha and two beta subunits. Requires Mg(2+) as cofactor.

The catalysed reaction is succinate + ATP + CoA = succinyl-CoA + ADP + phosphate. The enzyme catalyses GTP + succinate + CoA = succinyl-CoA + GDP + phosphate. Its pathway is carbohydrate metabolism; tricarboxylic acid cycle; succinate from succinyl-CoA (ligase route): step 1/1. Functionally, succinyl-CoA synthetase functions in the citric acid cycle (TCA), coupling the hydrolysis of succinyl-CoA to the synthesis of either ATP or GTP and thus represents the only step of substrate-level phosphorylation in the TCA. The beta subunit provides nucleotide specificity of the enzyme and binds the substrate succinate, while the binding sites for coenzyme A and phosphate are found in the alpha subunit. The sequence is that of Succinate--CoA ligase [ADP-forming] subunit beta from Pyrobaculum aerophilum (strain ATCC 51768 / DSM 7523 / JCM 9630 / CIP 104966 / NBRC 100827 / IM2).